The chain runs to 142 residues: Hemoglobin larval subunit alpha (142 aa).

The region spanning 2–142 is the Globin domain; sequence VLSAEEKALV…VSAVLTSKYR (141 aa). His-59 provides a ligand contact to O2. His-88 provides a ligand contact to heme b.

Belongs to the globin family. Heterotetramer of two alpha chains and two beta chains. In terms of tissue distribution, red blood cells.

Involved in oxygen transport from the lung to the various peripheral tissues. The polypeptide is Hemoglobin larval subunit alpha (Pleurodeles waltl (Iberian ribbed newt)).